The chain runs to 491 residues: Chromosomal replication initiator protein DnaA (491 aa).

A domain I, interacts with DnaA modulators region spans residues 1–69; that stretch reads MTTWDKCLKK…TIQECHGNDL (69 aa). Positions 69 to 154 are domain II; the sequence is LIIEYSNKKF…KEDEEYSFGL (86 aa). The interval 155–371 is domain III, AAA+ region; it reads PLKEKYVFDS…GALNRVLTTS (217 aa). ATP-binding residues include G199, G201, K202, and T203. The tract at residues 372–491 is domain IV, binds dsDNA; the sequence is KFNHKDPTIE…YELLLDKISR (120 aa).

The protein belongs to the DnaA family. As to quaternary structure, oligomerizes as a right-handed, spiral filament on DNA at oriC.

It localises to the cytoplasm. Functionally, plays an essential role in the initiation and regulation of chromosomal replication. ATP-DnaA binds to the origin of replication (oriC) to initiate formation of the DNA replication initiation complex once per cell cycle. Binds the DnaA box (a 9 base pair repeat at the origin) and separates the double-stranded (ds)DNA. Forms a right-handed helical filament on oriC DNA; dsDNA binds to the exterior of the filament while single-stranded (ss)DNA is stabiized in the filament's interior. The ATP-DnaA-oriC complex binds and stabilizes one strand of the AT-rich DNA unwinding element (DUE), permitting loading of DNA polymerase. After initiation quickly degrades to an ADP-DnaA complex that is not apt for DNA replication. Binds acidic phospholipids. The protein is Chromosomal replication initiator protein DnaA of Francisella tularensis subsp. holarctica (strain OSU18).